Consider the following 462-residue polypeptide: Probable protein phosphatase 2C 1 (462 aa).

The region spanning 60-362 (SSCIFTQQGR…DDCAVVCLFL (303 aa)) is the PPM-type phosphatase domain. Residues aspartate 95, glycine 96, aspartate 307, and aspartate 353 each contribute to the Mn(2+) site. Disordered stretches follow at residues 369 to 394 (ETSD…QGAE) and 421 to 443 (EADN…LEGV). The span at 376–385 (QCFSSATNAV) shows a compositional bias: polar residues. The segment covering 424-434 (NAEKEKTREGE) has biased composition (basic and acidic residues).

It belongs to the PP2C family. Interacts with GCN5. It depends on Mg(2+) as a cofactor. Mn(2+) is required as a cofactor.

It carries out the reaction O-phospho-L-seryl-[protein] + H2O = L-seryl-[protein] + phosphate. The enzyme catalyses O-phospho-L-threonyl-[protein] + H2O = L-threonyl-[protein] + phosphate. In terms of biological role, may act as negative regulator of GCN5. The chain is Probable protein phosphatase 2C 1 (PPC6-6) from Arabidopsis thaliana (Mouse-ear cress).